Reading from the N-terminus, the 305-residue chain is Heterogeneous nuclear ribonucleoprotein A0 (305 aa).

Position 1 is an N-acetylmethionine (Met-1). In terms of domain architecture, RRM 1 spans 7–86 (CKLFIGGLNV…VELKRAVSRE (80 aa)). Ser-68 is subject to Phosphoserine. Lys-80 is covalently cross-linked (Glycyl lysine isopeptide (Lys-Gly) (interchain with G-Cter in SUMO2)). A Phosphoserine; by MAPKAPK2 modification is found at Ser-84. Residues Lys-96, Lys-98, Lys-99, and Lys-106 each participate in a glycyl lysine isopeptide (Lys-Gly) (interchain with G-Cter in SUMO2) cross-link. Residues 98–175 (KKLFVGGLKG…HRVEVKKAVP (78 aa)) form the RRM 2 domain. Lys-133 bears the N6-acetyllysine mark. Omega-N-methylarginine is present on Arg-139. Glycyl lysine isopeptide (Lys-Gly) (interchain with G-Cter in SUMO2) cross-links involve residues Lys-154, Lys-159, Lys-172, and Lys-176. Disordered regions lie at residues 178–211 (DIHA…RDQN) and 265–305 (QSSY…GGSF). Gly residues-rich tracts occupy residues 181–211 (AGGG…RDQN) and 272–284 (KSGG…GSWG). Arg-286 is subject to Omega-N-methylarginine. A compositionally biased stretch (gly residues) spans 292 to 305 (YRGGYGGGYGGGSF). Asymmetric dimethylarginine; alternate is present on Arg-293. Arg-293 is modified (dimethylated arginine; alternate). Arg-293 is modified (omega-N-methylarginine; alternate).

Post-translationally, phosphorylated at Ser-84 by MAPKAPK2 in response to LPS treatment, promoting stabilization of GADD45A mRNA. In terms of processing, arg-293 is dimethylated, probably to asymmetric dimethylarginine.

The protein resides in the nucleus. In terms of biological role, mRNA-binding component of ribonucleosomes. Specifically binds AU-rich element (ARE)-containing mRNAs. Involved in post-transcriptional regulation of cytokines mRNAs. The chain is Heterogeneous nuclear ribonucleoprotein A0 (Hnrnpa0) from Mus musculus (Mouse).